The following is a 465-amino-acid chain: tRNA-2-methylthio-N(6)-dimethylallyladenosine synthase (465 aa).

Residues 5 to 125 (RKLHIKSYGC…LPELLKRAGN (121 aa)) enclose the MTTase N-terminal domain. [4Fe-4S] cluster is bound by residues C14, C50, C88, C166, C170, and C173. The Radical SAM core domain maps to 152–384 (RARGISAFVT…QELIDSQQSA (233 aa)). The TRAM domain occupies 387–449 (KAAIGSTVDV…RYSFLGELVT (63 aa)).

Belongs to the methylthiotransferase family. MiaB subfamily. Monomer. Requires [4Fe-4S] cluster as cofactor.

The protein localises to the cytoplasm. It catalyses the reaction N(6)-dimethylallyladenosine(37) in tRNA + (sulfur carrier)-SH + AH2 + 2 S-adenosyl-L-methionine = 2-methylsulfanyl-N(6)-dimethylallyladenosine(37) in tRNA + (sulfur carrier)-H + 5'-deoxyadenosine + L-methionine + A + S-adenosyl-L-homocysteine + 2 H(+). Functionally, catalyzes the methylthiolation of N6-(dimethylallyl)adenosine (i(6)A), leading to the formation of 2-methylthio-N6-(dimethylallyl)adenosine (ms(2)i(6)A) at position 37 in tRNAs that read codons beginning with uridine. The sequence is that of tRNA-2-methylthio-N(6)-dimethylallyladenosine synthase from Bradyrhizobium diazoefficiens (strain JCM 10833 / BCRC 13528 / IAM 13628 / NBRC 14792 / USDA 110).